A 261-amino-acid polypeptide reads, in one-letter code: Glutamate 5-kinase (261 aa).

Lys-7 provides a ligand contact to ATP. Ser-46, Asp-131, and Asn-147 together coordinate substrate. ATP is bound by residues 167–168 and 209–215; these read SD and TGGIVTK.

The protein belongs to the glutamate 5-kinase family.

The protein resides in the cytoplasm. It catalyses the reaction L-glutamate + ATP = L-glutamyl 5-phosphate + ADP. The protein operates within amino-acid biosynthesis; L-proline biosynthesis; L-glutamate 5-semialdehyde from L-glutamate: step 1/2. Catalyzes the transfer of a phosphate group to glutamate to form L-glutamate 5-phosphate. The protein is Glutamate 5-kinase of Wolinella succinogenes (strain ATCC 29543 / DSM 1740 / CCUG 13145 / JCM 31913 / LMG 7466 / NCTC 11488 / FDC 602W) (Vibrio succinogenes).